The primary structure comprises 322 residues: uncharacterized protein (322 aa).

Composition is skewed to basic residues over residues 1–16 (MPGNSRRRGAVRKSGT) and 43–61 (LRPHHPAAKRARAQPRRPV). Residues 1–69 (MPGNSRRRGA…PVKRADETET (69 aa)) are disordered. S-adenosyl-L-methionine contacts are provided by G261, I281, and L290.

It belongs to the class IV-like SAM-binding methyltransferase superfamily. RNA methyltransferase TrmH family.

This is an uncharacterized protein from Mycobacterium tuberculosis (strain CDC 1551 / Oshkosh).